Here is a 652-residue protein sequence, read N- to C-terminus: Leucine-rich repeat-containing protein 4 (652 aa).

Positions Met-1 to Ala-40 are cleaved as a signal peptide. The Extracellular segment spans residues Met-1–Lys-526. In terms of domain architecture, LRRNT spans Gly-41 to Ser-74. 2 disulfide bridges follow: Cys-45/Cys-51 and Cys-49/Cys-60. 9 LRR repeats span residues Asn-75–His-96, His-99–Gly-120, Ser-123–Tyr-144, Lys-147–Arg-168, Ser-171–Gly-193, Asn-196–Val-217, Gly-218–Gly-239, Ser-242–Gly-263, and Ser-266–Pro-287. Residues Asn-299–Ala-351 enclose the LRRCT domain. Disulfide bonds link Cys-303–Cys-328 and Cys-305–Cys-349. 2 N-linked (GlcNAc...) asparagine glycosylation sites follow: Asn-321 and Asn-362. Residues Pro-352–Ser-441 enclose the Ig-like C2-type domain. A disulfide bridge links Cys-373 with Cys-423. Residues Ile-527–Tyr-547 form a helical membrane-spanning segment. The Cytoplasmic segment spans residues Lys-548 to Ile-652.

Interacts (via LRR repeats) with NTNG2. Interacts with DLG4. Found in a complex with NMDA receptors. N-glycosylated. Mainly expressed in the brain. Expression is concentrated in the olfactory bulb, cortex, hippocampus and cerebellum in adult brain. Detected both embryonically and postnatally with stronger expression in postnatal stages.

The protein localises to the membrane. The protein resides in the postsynaptic cell membrane. Its function is as follows. Synaptic adhesion protein. Regulates the formation of exitatory synapses through the recruitment of pre-and-postsynaptic proteins. Organize the lamina/pathway-specific differentiation of dendrites. Plays an important role for auditory synaptic responses. Involved in the suppression of glioma. This is Leucine-rich repeat-containing protein 4 (Lrrc4) from Rattus norvegicus (Rat).